The sequence spans 281 residues: Cytochrome c oxidase subunit 3 (281 aa).

Topologically, residues 1 to 15 (MTHQTHAYHMVNPSP) are mitochondrial matrix. A helical membrane pass occupies residues 16–34 (WPLTGALSALLLTSGLIMW). Residues 35–40 (FHYNSS) are Mitochondrial intermembrane-facing. Residues 41 to 66 (TLMFMGLTTMLLTMYQWWRDIIREGT) form a helical membrane-spanning segment. Over 67-72 (FQGHHT) the chain is Mitochondrial matrix. Residues 73 to 105 (PVVQKGLRYGMILFILSEVFFFIGFFWAFYHSS) form a helical membrane-spanning segment. Over 106 to 128 (LAPTPELGGCWPPTGIHPLNPLE) the chain is Mitochondrial intermembrane. Residues 129–152 (VPLLNTSILLASGVSITWAHHSLM) traverse the membrane as a helical segment. The Mitochondrial matrix portion of the chain corresponds to 153–155 (EGN). Residues 156–183 (RKQMIQALLITISLGLYFTILQAMEYYE) traverse the membrane as a helical segment. At 184–190 (ASFTISD) the chain is on the mitochondrial intermembrane side. Residues 191–223 (GVYGSTFFVATGFHGLHVIIGSTFLIVCLLRQL) form a helical membrane-spanning segment. The Mitochondrial matrix segment spans residues 224–232 (FYHFTSTHH). The helical transmembrane segment at 233–256 (FGFEAAAWYWHFVDVVWLFLYVSI) threads the bilayer. Over 257 to 281 (YWWGSYFSSMISTTDFQSLSSGSNQ) the chain is Mitochondrial intermembrane.

Belongs to the cytochrome c oxidase subunit 3 family. As to quaternary structure, component of the cytochrome c oxidase (complex IV, CIV), a multisubunit enzyme composed of 14 subunits. The complex is composed of a catalytic core of 3 subunits MT-CO1, MT-CO2 and MT-CO3, encoded in the mitochondrial DNA, and 11 supernumerary subunits COX4I, COX5A, COX5B, COX6A, COX6B, COX6C, COX7A, COX7B, COX7C, COX8 and NDUFA4, which are encoded in the nuclear genome. The complex exists as a monomer or a dimer and forms supercomplexes (SCs) in the inner mitochondrial membrane with NADH-ubiquinone oxidoreductase (complex I, CI) and ubiquinol-cytochrome c oxidoreductase (cytochrome b-c1 complex, complex III, CIII), resulting in different assemblies (supercomplex SCI(1)III(2)IV(1) and megacomplex MCI(2)III(2)IV(2)).

Its subcellular location is the mitochondrion inner membrane. The catalysed reaction is 4 Fe(II)-[cytochrome c] + O2 + 8 H(+)(in) = 4 Fe(III)-[cytochrome c] + 2 H2O + 4 H(+)(out). In terms of biological role, component of the cytochrome c oxidase, the last enzyme in the mitochondrial electron transport chain which drives oxidative phosphorylation. The respiratory chain contains 3 multisubunit complexes succinate dehydrogenase (complex II, CII), ubiquinol-cytochrome c oxidoreductase (cytochrome b-c1 complex, complex III, CIII) and cytochrome c oxidase (complex IV, CIV), that cooperate to transfer electrons derived from NADH and succinate to molecular oxygen, creating an electrochemical gradient over the inner membrane that drives transmembrane transport and the ATP synthase. Cytochrome c oxidase is the component of the respiratory chain that catalyzes the reduction of oxygen to water. Electrons originating from reduced cytochrome c in the intermembrane space (IMS) are transferred via the dinuclear copper A center (CU(A)) of subunit 2 and heme A of subunit 1 to the active site in subunit 1, a binuclear center (BNC) formed by heme A3 and copper B (CU(B)). The BNC reduces molecular oxygen to 2 water molecules using 4 electrons from cytochrome c in the IMS and 4 protons from the mitochondrial matrix. The sequence is that of Cytochrome c oxidase subunit 3 (MT-CO3) from Didelphis virginiana (North American opossum).